We begin with the raw amino-acid sequence, 390 residues long: uncharacterized protein (390 aa).

Belongs to the peptidase M24 family.

This is an uncharacterized protein from Sinorhizobium fredii (strain NBRC 101917 / NGR234).